A 196-amino-acid chain; its full sequence is MDAKQSVAAAKPSLAKKTASASFRLRNGSLNAVRLRRVFDLFDRNGDGEITVDELAQALDALGLVADRDGLAATVSAYVPEGAAGLRFEDFDALHRALGDALFGSLDGAAAAGEPGGGGGDEEEEMREAFKVFDVDGDGFISASELQEVLKKLGLPEAGSLATVREMICNVDRNSDGRVDFGEFKSMMQGITVWGP.

EF-hand domains are found at residues L30–V65, D121–P156, and G159–W194. Ca(2+)-binding residues include D43, N45, D47, E49, E54, D134, D136, D138, E145, D172, N174, D176, R178, and E183.

Potential calcium sensor. The protein is Probable calcium-binding protein CML32 (CML32) of Oryza sativa subsp. japonica (Rice).